Consider the following 603-residue polypeptide: DNA ligase (603 aa).

Residue Glu262 participates in ATP binding. Residue Lys264 is the N6-AMP-lysine intermediate of the active site. Arg269, Arg285, Glu315, Phe355, Arg432, and Lys438 together coordinate ATP.

Belongs to the ATP-dependent DNA ligase family. Mg(2+) is required as a cofactor.

The enzyme catalyses ATP + (deoxyribonucleotide)n-3'-hydroxyl + 5'-phospho-(deoxyribonucleotide)m = (deoxyribonucleotide)n+m + AMP + diphosphate.. Its function is as follows. DNA ligase that seals nicks in double-stranded DNA during DNA replication, DNA recombination and DNA repair. The polypeptide is DNA ligase (Caldivirga maquilingensis (strain ATCC 700844 / DSM 13496 / JCM 10307 / IC-167)).